Reading from the N-terminus, the 103-residue chain is Small ribosomal subunit protein uS10 (103 aa).

Belongs to the universal ribosomal protein uS10 family. In terms of assembly, part of the 30S ribosomal subunit.

In terms of biological role, involved in the binding of tRNA to the ribosomes. This chain is Small ribosomal subunit protein uS10, found in Chlorobium phaeobacteroides (strain DSM 266 / SMG 266 / 2430).